Consider the following 24-residue polypeptide: Iron-regulated 31 kDa protein (24 aa).

The protein resides in the periplasm. Its function is as follows. May be involved in iron uptake. In Haemophilus influenzae, this protein is Iron-regulated 31 kDa protein.